Reading from the N-terminus, the 96-residue chain is MALERSDVEKIAHLARLGLSEADLPRTTETLNNILGLIDQMQAVDTSGVEPLAHPLEATQRLRPDAVTETDHRDAYQTIAPAVEEGLYLVPKVIES.

Belongs to the GatC family. In terms of assembly, heterotrimer of A, B and C subunits.

The catalysed reaction is L-glutamyl-tRNA(Gln) + L-glutamine + ATP + H2O = L-glutaminyl-tRNA(Gln) + L-glutamate + ADP + phosphate + H(+). The enzyme catalyses L-aspartyl-tRNA(Asn) + L-glutamine + ATP + H2O = L-asparaginyl-tRNA(Asn) + L-glutamate + ADP + phosphate + 2 H(+). Its function is as follows. Allows the formation of correctly charged Asn-tRNA(Asn) or Gln-tRNA(Gln) through the transamidation of misacylated Asp-tRNA(Asn) or Glu-tRNA(Gln) in organisms which lack either or both of asparaginyl-tRNA or glutaminyl-tRNA synthetases. The reaction takes place in the presence of glutamine and ATP through an activated phospho-Asp-tRNA(Asn) or phospho-Glu-tRNA(Gln). The polypeptide is Glutamyl-tRNA(Gln) amidotransferase subunit C (Pseudomonas aeruginosa (strain ATCC 15692 / DSM 22644 / CIP 104116 / JCM 14847 / LMG 12228 / 1C / PRS 101 / PAO1)).